The sequence spans 970 residues: Disks large 1 tumor suppressor protein (970 aa).

In terms of domain architecture, L27 spans lysine 4–serine 64. A disordered region spans residues threonine 161–aspartate 209. Over residues glutamine 171 to glutamine 204 the composition is skewed to low complexity. PDZ domains follow at residues aspartate 216–arginine 303 and glutamate 330–glutamine 421. The tract at residues threonine 424 to arginine 477 is disordered. Residues serine 437–histidine 462 show a composition bias toward low complexity. The segment covering methionine 466–arginine 477 has biased composition (polar residues). Serine 496 carries the phosphoserine modification. A PDZ 3 domain is found at threonine 506 to proline 587. The 71-residue stretch at lysine 620–methionine 690 folds into the SH3 domain. Threonine 714 carries the post-translational modification Phosphothreonine. A Guanylate kinase-like domain is found at threonine 780–tryptophan 955.

The protein belongs to the MAGUK family. As to expression, during the cellular blastoderm stage, isoform B, isoform F, isoform H, isoform I and isoform L expression is localized to the cell borders. From stage 11 onwards, expression is found predominantly in the developing nervous system: axon bundles in the ventral cord and the brain. Stage 14 and 15 embryos exhibit expression in the developing body wall muscle. Expression in neuropil regions of the CNS and at NMJs persists through to larval development. Other isoforms show expression in embryonic epithelial cells. In larvae, expression is seen as a belt around salivary glands, imaginal disks and proventriculus. Expressed in adult reproductive tissues. In epithelia, coexpressed with scrib throughout development.

The protein resides in the cytoplasm. Its subcellular location is the cell membrane. The protein localises to the basolateral cell membrane. It localises to the cytoskeleton. It is found in the cell junction. The protein resides in the septate junction. During embryonic development, some isoforms are essential for proper neuronal differentiation and organization. Required for cell polarity; maintenance of apicobasal polarity. Plays a critical role at septate junctions in cellular growth control during larval development. The presence of a guanylate kinase domain suggests involvement in cellular adhesion as well as signal transduction to control cellular proliferation. This Drosophila melanogaster (Fruit fly) protein is Disks large 1 tumor suppressor protein (dlg1).